Here is a 37-residue protein sequence, read N- to C-terminus: Large ribosomal subunit protein bL36A (37 aa).

The protein belongs to the bacterial ribosomal protein bL36 family.

The chain is Large ribosomal subunit protein bL36A from Kocuria rhizophila (strain ATCC 9341 / DSM 348 / NBRC 103217 / DC2201).